The chain runs to 707 residues: MANSSSQHMVCGSVTFRDVAVDFSQEEWACLDATQKVLYRNIMLETYSNLVAVVGRCIPKPDLIVLLEPEKEPWMAVKKETGRPSQGLETGFEAENRSPKNHVYNKKLPKQTIQQLSKTSDVQGVSVSNGPGYSVIKEPQNYQEGDANRNITNKKEMSTYTSKTLAHNKEKPYKCKDCGKCFGCKSNLHQHESIHTGEKPYECKDCGKTFRLPQMLSRHQKSHSDERPFECNICGKSFHLPTLLQYHKNIHTGLKPFECEECGKSFKSFNRISTLFQHRTIHAGMKPYKCNVCGKAFNRRSNLLQHQKIHSEDRPFHCKVCGKAFTVLAQLTRHENIHTEDKSFECKQCGKIFSNGSYLLRHYDTHTNEKPFECNICGKAFRLHLYLSEHQKTHTDEKPFKCKLCESAFRRKYQLSEHQRIHTDGKPYQCKDCWEFFRRRSNFIEHQSIHTGKKPFECKDCGKVFRLNIHLIRHQRFHSDEKPFECKECGKAFHFSSQLNNHKTSHTGQTPFECKECGKSFKRVSSLVEHRIIHSGVKPYKCNACGRAFNRRSNLMQHEKIHSDERPFECKDCGKAFTVLAQLTRHQTIHNGKKSYECEQCGSAFRLPYQLTQHQRIHYDVKPFQCKECGRAFVRSTGLRIHERIHTGEKPFQCKECGEAFQYHYQFLGHFRIHTGKNPYECSECGKYFTYGRDLKVHQSIHNLEKP.

The KRAB domain occupies 14–86 (VTFRDVAVDF…VKKETGRPSQ (73 aa)). 19 consecutive C2H2-type zinc fingers follow at residues 173-195 (YKCKDCGKCFGCKSNLHQHESIH), 201-223 (YECKDCGKTFRLPQMLSRHQKSH), 229-251 (FECNICGKSFHLPTLLQYHKNIH), 257-282 (FECEECGKSFKSFNRISTLFQHRTIH), 288-310 (YKCNVCGKAFNRRSNLLQHQKIH), 316-338 (FHCKVCGKAFTVLAQLTRHENIH), 344-366 (FECKQCGKIFSNGSYLLRHYDTH), 372-394 (FECNICGKAFRLHLYLSEHQKTH), 400-422 (FKCKLCESAFRRKYQLSEHQRIH), 428-450 (YQCKDCWEFFRRRSNFIEHQSIH), 456-478 (FECKDCGKVFRLNIHLIRHQRFH), 484-506 (FECKECGKAFHFSSQLNNHKTSH), 512-534 (FECKECGKSFKRVSSLVEHRIIH), 540-562 (YKCNACGRAFNRRSNLMQHEKIH), 568-590 (FECKDCGKAFTVLAQLTRHQTIH), 596-618 (YECEQCGSAFRLPYQLTQHQRIH), 624-646 (FQCKECGRAFVRSTGLRIHERIH), 652-674 (FQCKECGEAFQYHYQFLGHFRIH), and 680-702 (YECSECGKYFTYGRDLKVHQSIH).

It belongs to the krueppel C2H2-type zinc-finger protein family. In terms of tissue distribution, expressed widely and evenly in most adult mouse tissues.

It is found in the nucleus. In terms of biological role, may have a role during differentiation processes. This Mus musculus (Mouse) protein is Zinc finger protein 60 (Zfp60).